Here is a 176-residue protein sequence, read N- to C-terminus: Adenine phosphoribosyltransferase (176 aa).

The protein belongs to the purine/pyrimidine phosphoribosyltransferase family. Homodimer.

It is found in the cytoplasm. It carries out the reaction AMP + diphosphate = 5-phospho-alpha-D-ribose 1-diphosphate + adenine. The protein operates within purine metabolism; AMP biosynthesis via salvage pathway; AMP from adenine: step 1/1. In terms of biological role, catalyzes a salvage reaction resulting in the formation of AMP, that is energically less costly than de novo synthesis. The chain is Adenine phosphoribosyltransferase from Borreliella burgdorferi (strain ZS7) (Borrelia burgdorferi).